The sequence spans 157 residues: Cyclic pyranopterin monophosphate synthase (157 aa).

Substrate-binding positions include 74-76 and 112-113; these read MCH and ME. Asp-127 is an active-site residue.

It belongs to the MoaC family. In terms of assembly, homohexamer; trimer of dimers.

It catalyses the reaction (8S)-3',8-cyclo-7,8-dihydroguanosine 5'-triphosphate = cyclic pyranopterin phosphate + diphosphate. Its pathway is cofactor biosynthesis; molybdopterin biosynthesis. Catalyzes the conversion of (8S)-3',8-cyclo-7,8-dihydroguanosine 5'-triphosphate to cyclic pyranopterin monophosphate (cPMP). In Campylobacter jejuni (strain RM1221), this protein is Cyclic pyranopterin monophosphate synthase.